Reading from the N-terminus, the 86-residue chain is Large ribosomal subunit protein uL23 (86 aa).

The protein belongs to the universal ribosomal protein uL23 family. As to quaternary structure, part of the 50S ribosomal subunit. Contacts protein L29.

Its function is as follows. Binds to 23S rRNA. One of the proteins that surrounds the polypeptide exit tunnel on the outside of the ribosome. This chain is Large ribosomal subunit protein uL23, found in Methanococcus maripaludis (strain C7 / ATCC BAA-1331).